The chain runs to 590 residues: Conglutin beta 4 (590 aa).

Residues 1 to 30 (MIKMRVRFPTLVLLLGIVFLMAVSIGIAYG) form the signal peptide. Residues 38–105 (HERPQEREQE…REPRREREQE (68 aa)) are compositionally biased toward basic and acidic residues. Positions 38-175 (HERPQEREQE…DSRRQRNPYY (138 aa)) are disordered. Residues 137 to 146 (QGSSSSSRRQ) are compositionally biased toward low complexity. Positions 174–332 (YYFSSERFQT…TFNTRYEEIQ (159 aa)) constitute a Cupin type-1 1 domain. The N-linked (GlcNAc...) asparagine glycan is linked to asparagine 239. Disordered regions lie at residues 340–362 (DEQE…GVIV) and 374–396 (KYAQ…LRSN). Residues 346–362 (EQRHGQEQSHQDEGVIV) are compositionally biased toward basic and acidic residues. In terms of domain architecture, Cupin type-1 2 spans 391–548 (FNLRSNKPIY…TFPGSTEDVE (158 aa)). A glycan (N-linked (GlcNAc...) asparagine) is linked at asparagine 498. A disordered region spans residues 559–579 (FANAQPQQQQQREREGRRGRR).

It belongs to the 7S seed storage protein family. As to quaternary structure, component of globulins complexes which accumulate in seeds.

Seed storage protein. Accumulates during seed development and is hydrolyzed after germination to provide a carbon and nitrogen source for the developing seedling. This Lupinus angustifolius (Narrow-leaved blue lupine) protein is Conglutin beta 4.